The sequence spans 433 residues: Enolase (433 aa).

Gln-167 contacts (2R)-2-phosphoglycerate. The active-site Proton donor is the Glu-209. The Mg(2+) site is built by Asp-246, Glu-291, and Asp-318. 4 residues coordinate (2R)-2-phosphoglycerate: Lys-343, Arg-372, Ser-373, and Lys-394. Catalysis depends on Lys-343, which acts as the Proton acceptor.

The protein belongs to the enolase family. In terms of assembly, component of the RNA degradosome, a multiprotein complex involved in RNA processing and mRNA degradation. Mg(2+) is required as a cofactor.

The protein resides in the cytoplasm. Its subcellular location is the secreted. The protein localises to the cell surface. The enzyme catalyses (2R)-2-phosphoglycerate = phosphoenolpyruvate + H2O. It functions in the pathway carbohydrate degradation; glycolysis; pyruvate from D-glyceraldehyde 3-phosphate: step 4/5. Catalyzes the reversible conversion of 2-phosphoglycerate (2-PG) into phosphoenolpyruvate (PEP). It is essential for the degradation of carbohydrates via glycolysis. The chain is Enolase from Pasteurella multocida (strain Pm70).